The following is a 561-amino-acid chain: Urocanate hydratase (561 aa).

Residues 52–53, Gln-130, 176–178, Glu-196, Arg-201, 242–243, 267–271, 277–278, and Tyr-326 contribute to the NAD(+) site; these read GG, GMG, NA, QTSAH, and YL. Cys-414 is a catalytic residue. NAD(+) is bound at residue Gly-496.

The protein belongs to the urocanase family. It depends on NAD(+) as a cofactor.

The protein resides in the cytoplasm. It catalyses the reaction 4-imidazolone-5-propanoate = trans-urocanate + H2O. Its pathway is amino-acid degradation; L-histidine degradation into L-glutamate; N-formimidoyl-L-glutamate from L-histidine: step 2/3. Functionally, catalyzes the conversion of urocanate to 4-imidazolone-5-propionate. The polypeptide is Urocanate hydratase (Rhizobium rhizogenes (strain K84 / ATCC BAA-868) (Agrobacterium radiobacter)).